Consider the following 285-residue polypeptide: RNA polymerase sigma factor RpoH (285 aa).

Positions 53-122 (LILSHLRFVI…IHEYVLRNWR (70 aa)) are sigma-70 factor domain-2. The short motif at 77 to 80 (DLIQ) is the Interaction with polymerase core subunit RpoC element. Positions 229-281 (ALLRLDERSRNIIRARWLDKKEKNTLQKIANNYGISAERVRQLEKNAMKKLKI) are sigma-70 factor domain-4. The H-T-H motif DNA-binding region spans 254–273 (LQKIANNYGISAERVRQLEK).

This sequence belongs to the sigma-70 factor family. RpoH subfamily. As to quaternary structure, interacts with the RNA polymerase core enzyme.

It is found in the cytoplasm. Its function is as follows. Sigma factors are initiation factors that promote the attachment of RNA polymerase to specific initiation sites and are then released. This sigma factor is involved in regulation of expression of heat shock genes. The polypeptide is RNA polymerase sigma factor RpoH (Buchnera aphidicola subsp. Schizaphis graminum (strain Sg)).